A 475-amino-acid chain; its full sequence is Protein translocase subunit SecD (475 aa).

6 consecutive transmembrane segments (helical) span residues 7-27 (LLIT…SLKF), 313-333 (KGFM…FIYY), 338-358 (LIAD…MAYL), 364-384 (LPGV…NVLI), 410-430 (FWTI…LFQF), and 437-457 (GFAV…VTVT).

It belongs to the SecD/SecF family. SecD subfamily. As to quaternary structure, forms a complex with SecF. Part of the essential Sec protein translocation apparatus which comprises SecA, SecYEG and auxiliary proteins SecDF. Other proteins may also be involved.

The protein localises to the cell inner membrane. Its function is as follows. Part of the Sec protein translocase complex. Interacts with the SecYEG preprotein conducting channel. SecDF uses the proton motive force (PMF) to complete protein translocation after the ATP-dependent function of SecA. This Endomicrobium trichonymphae protein is Protein translocase subunit SecD.